Reading from the N-terminus, the 503-residue chain is Cytochrome c lysine N-methyltransferase 1 (503 aa).

In terms of domain architecture, SET spans 52–276 (SKFELLRIPR…EEAQVFISYA (225 aa)). Positions 190–291 (NYEKLISTVY…VHFEQIYGFL (102 aa)) are SET-like.

This sequence belongs to the class V-like SAM-binding methyltransferase superfamily.

Its subcellular location is the cytoplasm. The protein resides in the cytosol. The catalysed reaction is L-lysyl-[cytochrome c] + S-adenosyl-L-methionine = N(6)-methyl-L-lysyl-[cytochrome c] + S-adenosyl-L-homocysteine + H(+). Methyltransferase which mediates trimethylation of cytochrome c (CYC1). This chain is Cytochrome c lysine N-methyltransferase 1 (CTM1), found in Kluyveromyces lactis (strain ATCC 8585 / CBS 2359 / DSM 70799 / NBRC 1267 / NRRL Y-1140 / WM37) (Yeast).